The chain runs to 405 residues: 4-hydroxy-3-methylbut-2-en-1-yl diphosphate synthase (flavodoxin) (405 aa).

4 residues coordinate [4Fe-4S] cluster: Cys-297, Cys-300, Cys-343, and Glu-350.

Belongs to the IspG family. Requires [4Fe-4S] cluster as cofactor.

It carries out the reaction (2E)-4-hydroxy-3-methylbut-2-enyl diphosphate + oxidized [flavodoxin] + H2O + 2 H(+) = 2-C-methyl-D-erythritol 2,4-cyclic diphosphate + reduced [flavodoxin]. The protein operates within isoprenoid biosynthesis; isopentenyl diphosphate biosynthesis via DXP pathway; isopentenyl diphosphate from 1-deoxy-D-xylulose 5-phosphate: step 5/6. Its function is as follows. Converts 2C-methyl-D-erythritol 2,4-cyclodiphosphate (ME-2,4cPP) into 1-hydroxy-2-methyl-2-(E)-butenyl 4-diphosphate. The chain is 4-hydroxy-3-methylbut-2-en-1-yl diphosphate synthase (flavodoxin) from Francisella tularensis subsp. mediasiatica (strain FSC147).